Here is a 258-residue protein sequence, read N- to C-terminus: L-aspartate dehydrogenase 1 (258 aa).

Alanine 121 and asparagine 181 together coordinate NAD(+). Histidine 211 is an active-site residue.

The protein belongs to the L-aspartate dehydrogenase family.

The enzyme catalyses L-aspartate + NADP(+) + H2O = oxaloacetate + NH4(+) + NADPH + H(+). The catalysed reaction is L-aspartate + NAD(+) + H2O = oxaloacetate + NH4(+) + NADH + H(+). The protein operates within cofactor biosynthesis; NAD(+) biosynthesis; iminoaspartate from L-aspartate (dehydrogenase route): step 1/1. In terms of biological role, specifically catalyzes the NAD or NADP-dependent dehydrogenation of L-aspartate to iminoaspartate. This Bordetella parapertussis (strain 12822 / ATCC BAA-587 / NCTC 13253) protein is L-aspartate dehydrogenase 1.